The following is a 152-amino-acid chain: Xanthine-guanine phosphoribosyltransferase (152 aa).

5-phospho-alpha-D-ribose 1-diphosphate is bound by residues 37–38 (RG) and 88–96 (DDLVDTGNT). Asp-89 lines the Mg(2+) pocket. Guanine-binding residues include Asp-92 and Ile-135. Xanthine contacts are provided by Asp-92 and Ile-135. GMP is bound by residues 92–96 (DTGNT) and 134–135 (WI).

The protein belongs to the purine/pyrimidine phosphoribosyltransferase family. XGPT subfamily. In terms of assembly, homotetramer. The cofactor is Mg(2+).

The protein localises to the cell inner membrane. It carries out the reaction GMP + diphosphate = guanine + 5-phospho-alpha-D-ribose 1-diphosphate. It catalyses the reaction XMP + diphosphate = xanthine + 5-phospho-alpha-D-ribose 1-diphosphate. The enzyme catalyses IMP + diphosphate = hypoxanthine + 5-phospho-alpha-D-ribose 1-diphosphate. It functions in the pathway purine metabolism; GMP biosynthesis via salvage pathway; GMP from guanine: step 1/1. Its pathway is purine metabolism; XMP biosynthesis via salvage pathway; XMP from xanthine: step 1/1. Its function is as follows. Purine salvage pathway enzyme that catalyzes the transfer of the ribosyl-5-phosphate group from 5-phospho-alpha-D-ribose 1-diphosphate (PRPP) to the N9 position of the 6-oxopurines guanine and xanthine to form the corresponding ribonucleotides GMP (guanosine 5'-monophosphate) and XMP (xanthosine 5'-monophosphate), with the release of PPi. To a lesser extent, also acts on hypoxanthine. This Actinobacillus succinogenes (strain ATCC 55618 / DSM 22257 / CCUG 43843 / 130Z) protein is Xanthine-guanine phosphoribosyltransferase.